The sequence spans 461 residues: Asparagine--tRNA ligase (461 aa).

The protein belongs to the class-II aminoacyl-tRNA synthetase family. As to quaternary structure, homodimer.

It localises to the cytoplasm. It carries out the reaction tRNA(Asn) + L-asparagine + ATP = L-asparaginyl-tRNA(Asn) + AMP + diphosphate + H(+). The polypeptide is Asparagine--tRNA ligase (Geobacter metallireducens (strain ATCC 53774 / DSM 7210 / GS-15)).